We begin with the raw amino-acid sequence, 278 residues long: Thiazole synthase (278 aa).

The active-site Schiff-base intermediate with DXP is K107. 1-deoxy-D-xylulose 5-phosphate-binding positions include G168, 194–195 (AG), and 216–217 (AS).

Belongs to the ThiG family. In terms of assembly, homotetramer. Forms heterodimers with either ThiH or ThiS.

The protein localises to the cytoplasm. It catalyses the reaction [ThiS sulfur-carrier protein]-C-terminal-Gly-aminoethanethioate + 2-iminoacetate + 1-deoxy-D-xylulose 5-phosphate = [ThiS sulfur-carrier protein]-C-terminal Gly-Gly + 2-[(2R,5Z)-2-carboxy-4-methylthiazol-5(2H)-ylidene]ethyl phosphate + 2 H2O + H(+). The protein operates within cofactor biosynthesis; thiamine diphosphate biosynthesis. Functionally, catalyzes the rearrangement of 1-deoxy-D-xylulose 5-phosphate (DXP) to produce the thiazole phosphate moiety of thiamine. Sulfur is provided by the thiocarboxylate moiety of the carrier protein ThiS. In vitro, sulfur can be provided by H(2)S. In Corynebacterium jeikeium (strain K411), this protein is Thiazole synthase.